The following is a 43-amino-acid chain: Potassium channel toxin gamma-KTx 4.5 (43 aa).

4 disulfide bridges follow: cysteine 5–cysteine 23, cysteine 11–cysteine 34, cysteine 20–cysteine 39, and cysteine 24–cysteine 41.

Belongs to the ergtoxin family. Gamma-KTx 4 subfamily. As to expression, expressed by the venom gland.

The protein localises to the secreted. Reversibly blocks Kv11/ERG potassium channels. The protein is Potassium channel toxin gamma-KTx 4.5 of Centruroides exilicauda (Bark scorpion).